Here is a 611-residue protein sequence, read N- to C-terminus: Dihydroxy-acid dehydratase (611 aa).

Aspartate 81 lines the Mg(2+) pocket. Cysteine 122 serves as a coordination point for [2Fe-2S] cluster. Mg(2+) contacts are provided by aspartate 123 and lysine 124. Lysine 124 is subject to N6-carboxylysine. Position 195 (cysteine 195) interacts with [2Fe-2S] cluster. Position 491 (glutamate 491) interacts with Mg(2+). The Proton acceptor role is filled by serine 517.

It belongs to the IlvD/Edd family. As to quaternary structure, homodimer. Requires [2Fe-2S] cluster as cofactor. Mg(2+) serves as cofactor.

It carries out the reaction (2R)-2,3-dihydroxy-3-methylbutanoate = 3-methyl-2-oxobutanoate + H2O. The enzyme catalyses (2R,3R)-2,3-dihydroxy-3-methylpentanoate = (S)-3-methyl-2-oxopentanoate + H2O. The protein operates within amino-acid biosynthesis; L-isoleucine biosynthesis; L-isoleucine from 2-oxobutanoate: step 3/4. It participates in amino-acid biosynthesis; L-valine biosynthesis; L-valine from pyruvate: step 3/4. Functionally, functions in the biosynthesis of branched-chain amino acids. Catalyzes the dehydration of (2R,3R)-2,3-dihydroxy-3-methylpentanoate (2,3-dihydroxy-3-methylvalerate) into 2-oxo-3-methylpentanoate (2-oxo-3-methylvalerate) and of (2R)-2,3-dihydroxy-3-methylbutanoate (2,3-dihydroxyisovalerate) into 2-oxo-3-methylbutanoate (2-oxoisovalerate), the penultimate precursor to L-isoleucine and L-valine, respectively. This Agrobacterium fabrum (strain C58 / ATCC 33970) (Agrobacterium tumefaciens (strain C58)) protein is Dihydroxy-acid dehydratase.